The primary structure comprises 415 residues: All trans-polyprenyl-diphosphate synthase PDSS1 (415 aa).

The interval 16 to 35 is disordered; the sequence is PAARSPGPGSPGRAGPLGPS. Isopentenyl diphosphate-binding residues include lysine 134, arginine 137, and histidine 173. Mg(2+) is bound by residues aspartate 180 and aspartate 184. An isopentenyl diphosphate-binding site is contributed by arginine 190.

The protein belongs to the FPP/GGPP synthase family. In terms of assembly, heterotetramer composed of 2 PDSS1/DPS1 and 2 PDSS2/DLP1 subunits. Requires Mg(2+) as cofactor.

It localises to the mitochondrion. The enzyme catalyses 7 isopentenyl diphosphate + (2E,6E)-farnesyl diphosphate = all-trans-decaprenyl diphosphate + 7 diphosphate. It catalyses the reaction 6 isopentenyl diphosphate + (2E,6E)-farnesyl diphosphate = all-trans-nonaprenyl diphosphate + 6 diphosphate. It participates in cofactor biosynthesis; ubiquinone biosynthesis. Functionally, heterotetrameric enzyme that catalyzes the condensation of farnesyl diphosphate (FPP), which acts as a primer, and isopentenyl diphosphate (IPP) to produce prenyl diphosphates of varying chain lengths and participates in the determination of the side chain of ubiquinone. Supplies nona and decaprenyl diphosphate, the precursors for the side chain of the isoprenoid quinones ubiquinone-9 (Q9)and ubiquinone-10 (Q10) respectively. The enzyme adds isopentenyl diphosphate molecules sequentially to farnesyl diphosphate with trans stereochemistry. This chain is All trans-polyprenyl-diphosphate synthase PDSS1, found in Homo sapiens (Human).